Here is a 542-residue protein sequence, read N- to C-terminus: Cryptochrome-1 (542 aa).

One can recognise a Photolyase/cryptochrome alpha/beta domain in the interval 5 to 140 (GANVIWFRHG…DFVEKVSHTL (136 aa)). FAD contacts are provided by residues arginine 237, serine 265, serine 267, glutamine 311, histidine 378, 410–412 (DAD), cysteine 416, and asparagine 419.

Belongs to the DNA photolyase class-1 family. In terms of assembly, interacts with tim and per; promoted by light conditions. Interaction with tim irreversibly commits tim to proteasomal degradation. Interacts with l(1)G0136/CG8198. It depends on FAD as a cofactor. In terms of tissue distribution, expressed at higher levels in the head than in body and it is more expressed in antennae than in legs, wings and mouth appendages. Prominent expression is seen in cells of the lateral brain, which are close to or coincident with the clock neurons. Abundance oscillates in a circadian manner.

The protein localises to the cytoplasm. The protein resides in the perinuclear region. It is found in the nucleus. Blue light-dependent regulator that is the input of the circadian feedback loop. Has no photolyase activity for cyclobutane pyrimidine dimers or 6-4 photoproducts. Regulation of expression by light suggests a role in photoreception for locomotor activity rhythms. Functions, together with per, as a transcriptional repressor required for the oscillation of peripheral circadian clocks and for the correct specification of clock cells. Genes directly activated by the transcription factors Clock (Clk) and cycle (cyc) are repressed by cry. Necessary for light-dependent magnetosensitivity, an intact circadian system is not required for the magnetoreception mechanism to operate. Required for both the naive and trained responses to magnetic field, consistent with the notion that cry is in the input pathway of magnetic sensing. This is Cryptochrome-1 from Drosophila melanogaster (Fruit fly).